A 569-amino-acid chain; its full sequence is Tetratricopeptide repeat protein 22 (569 aa).

7 TPR repeats span residues 66–99 (PAVRHLLGAFAFYLEELDEARECFLEVAHEHPGN), 101–133 (NAWANLAHVYGRLGQEEEEEACAARLADLMGLA), 203–237 (ATLYIRLDGIFLELGSEEQKRLPAFNRTLALLRQV), 260–294 (KDTFSTTPMGVHDCGYSGTDPLDCFGKAIEIAKNQ), 295–328 (PPILNRLAKIFYFLGKQDMAIGTCNMALDVLRDP), 383–418 (FKAYLDIGQVYYYMGVDAVQELLAVDEAALNQALVF), and 432–465 (PELQLLRGKCLRIKGEDANAAACFKRAVELDDAG).

This chain is Tetratricopeptide repeat protein 22 (TTC22), found in Homo sapiens (Human).